Consider the following 209-residue polypeptide: Guanylate kinase (209 aa).

A Guanylate kinase-like domain is found at G10 to V189. A17–T24 contacts ATP.

It belongs to the guanylate kinase family.

Its subcellular location is the cytoplasm. It carries out the reaction GMP + ATP = GDP + ADP. Essential for recycling GMP and indirectly, cGMP. This Myxococcus xanthus (strain DK1622) protein is Guanylate kinase.